We begin with the raw amino-acid sequence, 400 residues long: Homoserine O-acetyltransferase (400 aa).

The segment at 1 to 22 (MMNVHPVKGPVATGGERPHEAD) is disordered. Positions 64-374 (NAILVCHALT…DKGHDAFLLD (311 aa)) constitute an AB hydrolase-1 domain. The active-site Nucleophile is serine 169. Arginine 239 is a binding site for substrate. Residues aspartate 335 and histidine 368 contribute to the active site. Aspartate 369 contacts substrate.

This sequence belongs to the AB hydrolase superfamily. MetX family. Homodimer.

Its subcellular location is the cytoplasm. The enzyme catalyses L-homoserine + acetyl-CoA = O-acetyl-L-homoserine + CoA. It participates in amino-acid biosynthesis; L-methionine biosynthesis via de novo pathway; O-acetyl-L-homoserine from L-homoserine: step 1/1. Its function is as follows. Transfers an acetyl group from acetyl-CoA to L-homoserine, forming acetyl-L-homoserine. The chain is Homoserine O-acetyltransferase from Rhodopseudomonas palustris (strain HaA2).